A 652-amino-acid chain; its full sequence is DNA ligase (652 aa).

NAD(+) contacts are provided by residues 29-33, 78-79, and Glu107; these read DQEYD and SL. Lys109 acts as the N6-AMP-lysine intermediate in catalysis. The NAD(+) site is built by Arg130, Glu164, Lys278, and Lys302. 4 residues coordinate Zn(2+): Cys395, Cys398, Cys413, and Cys418. The region spanning 577-652 is the BRCT domain; it reads DTSAQLFGLT…VKDENWLLQL (76 aa).

This sequence belongs to the NAD-dependent DNA ligase family. LigA subfamily. Mg(2+) is required as a cofactor. Requires Mn(2+) as cofactor.

It catalyses the reaction NAD(+) + (deoxyribonucleotide)n-3'-hydroxyl + 5'-phospho-(deoxyribonucleotide)m = (deoxyribonucleotide)n+m + AMP + beta-nicotinamide D-nucleotide.. Its function is as follows. DNA ligase that catalyzes the formation of phosphodiester linkages between 5'-phosphoryl and 3'-hydroxyl groups in double-stranded DNA using NAD as a coenzyme and as the energy source for the reaction. It is essential for DNA replication and repair of damaged DNA. The protein is DNA ligase of Streptococcus uberis (strain ATCC BAA-854 / 0140J).